The chain runs to 350 residues: Ferredoxin--NADP reductase (350 aa).

Residues Thr-22, Glu-41, Gln-49, Tyr-54, Val-94, Phe-129, Asp-295, and Ser-336 each contribute to the FAD site.

The protein belongs to the ferredoxin--NADP reductase type 2 family. Homodimer. FAD serves as cofactor.

The enzyme catalyses 2 reduced [2Fe-2S]-[ferredoxin] + NADP(+) + H(+) = 2 oxidized [2Fe-2S]-[ferredoxin] + NADPH. This chain is Ferredoxin--NADP reductase, found in Chlorobium luteolum (strain DSM 273 / BCRC 81028 / 2530) (Pelodictyon luteolum).